The primary structure comprises 1068 residues: Carbamoyl phosphate synthase large chain (1068 aa).

Positions 1 to 401 (MPRRTDLHRI…SLLKAVRSLE (401 aa)) are carboxyphosphate synthetic domain. Residues R129, R169, G175, G176, Q208, I210, E215, G241, V242, H243, Q284, and E298 each contribute to the ATP site. The ATP-grasp 1 domain maps to 133–327 (KQLMDELGQP…IAKIAAKIAV (195 aa)). 3 residues coordinate Mg(2+): Q284, E298, and N300. Mn(2+) is bound by residues Q284, E298, and N300. Residues 402–546 (IGVDHLALRE…YSTYEMENES (145 aa)) form an oligomerization domain region. Residues 547–935 (KKSQRPSVLV…ALYKVFEAAN (389 aa)) form a carbamoyl phosphate synthetic domain region. The ATP-grasp 2 domain occupies 671 to 867 (ESLLAELGIP…MAEVATRIIL (197 aa)). Residues R707, R746, L748, E752, G777, V778, H779, S780, Q820, and E838 each coordinate ATP. Mg(2+) is bound by residues Q820, E838, and N840. Positions 820, 838, and 840 each coordinate Mn(2+). Positions 936-1068 (LHVPEYGKIL…ESRVFSTESI (133 aa)) constitute an MGS-like domain. The tract at residues 936-1068 (LHVPEYGKIL…ESRVFSTESI (133 aa)) is allosteric domain.

The protein belongs to the CarB family. As to quaternary structure, composed of two chains; the small (or glutamine) chain promotes the hydrolysis of glutamine to ammonia, which is used by the large (or ammonia) chain to synthesize carbamoyl phosphate. Tetramer of heterodimers (alpha,beta)4. Requires Mg(2+) as cofactor. Mn(2+) serves as cofactor.

It carries out the reaction hydrogencarbonate + L-glutamine + 2 ATP + H2O = carbamoyl phosphate + L-glutamate + 2 ADP + phosphate + 2 H(+). The catalysed reaction is hydrogencarbonate + NH4(+) + 2 ATP = carbamoyl phosphate + 2 ADP + phosphate + 2 H(+). It functions in the pathway amino-acid biosynthesis; L-arginine biosynthesis; carbamoyl phosphate from bicarbonate: step 1/1. Its pathway is pyrimidine metabolism; UMP biosynthesis via de novo pathway; (S)-dihydroorotate from bicarbonate: step 1/3. Large subunit of the glutamine-dependent carbamoyl phosphate synthetase (CPSase). CPSase catalyzes the formation of carbamoyl phosphate from the ammonia moiety of glutamine, carbonate, and phosphate donated by ATP, constituting the first step of 2 biosynthetic pathways, one leading to arginine and/or urea and the other to pyrimidine nucleotides. The large subunit (synthetase) binds the substrates ammonia (free or transferred from glutamine from the small subunit), hydrogencarbonate and ATP and carries out an ATP-coupled ligase reaction, activating hydrogencarbonate by forming carboxy phosphate which reacts with ammonia to form carbamoyl phosphate. The sequence is that of Carbamoyl phosphate synthase large chain from Cutibacterium acnes (strain DSM 16379 / KPA171202) (Propionibacterium acnes).